The chain runs to 394 residues: NAD(P)H-quinone oxidoreductase subunit H (394 aa).

It belongs to the complex I 49 kDa subunit family. NDH-1 can be composed of about 15 different subunits; different subcomplexes with different compositions have been identified which probably have different functions.

The protein resides in the cellular thylakoid membrane. It carries out the reaction a plastoquinone + NADH + (n+1) H(+)(in) = a plastoquinol + NAD(+) + n H(+)(out). It catalyses the reaction a plastoquinone + NADPH + (n+1) H(+)(in) = a plastoquinol + NADP(+) + n H(+)(out). Its function is as follows. NDH-1 shuttles electrons from an unknown electron donor, via FMN and iron-sulfur (Fe-S) centers, to quinones in the respiratory and/or the photosynthetic chain. The immediate electron acceptor for the enzyme in this species is believed to be plastoquinone. Couples the redox reaction to proton translocation, and thus conserves the redox energy in a proton gradient. Cyanobacterial NDH-1 also plays a role in inorganic carbon-concentration. This Parasynechococcus marenigrum (strain WH8102) protein is NAD(P)H-quinone oxidoreductase subunit H.